The sequence spans 82 residues: U10-myrmicitoxin-Mri1c (82 aa).

Positions 1–26 (MRLSYVSLTLAIIFVMAIVHAPETEA) are cleaved as a signal peptide. The propeptide occupies 27-52 (KAYPEADAVGEASAVGEADAVGVADP). Ile81 is modified (isoleucine amide).

The protein belongs to the formicidae venom precursor-01 superfamily. Expressed by the venom gland.

It is found in the secreted. Induces paralysis 5 minutes after injection into blowflies (L.caesar). In most cases is not lethal 24 hours after injection, but paralysis is irreversible. May have antimicrobial properties, like most ant linear peptides. This Manica rubida (European giant red ant) protein is U10-myrmicitoxin-Mri1c.